The sequence spans 146 residues: 6-carboxy-5,6,7,8-tetrahydropterin synthase (146 aa).

His-27 is a binding site for Zn(2+). Catalysis depends on Cys-37, which acts as the Proton acceptor. Residues His-41 and His-43 each contribute to the Zn(2+) site. Residues His-78 and Glu-129 each act as charge relay system in the active site.

This sequence belongs to the PTPS family. QueD subfamily. As to quaternary structure, homotetramer. It depends on Zn(2+) as a cofactor.

The catalysed reaction is 7,8-dihydroneopterin 3'-triphosphate + H2O = 6-carboxy-5,6,7,8-tetrahydropterin + triphosphate + acetaldehyde + 2 H(+). Its pathway is purine metabolism; 7-cyano-7-deazaguanine biosynthesis. In terms of biological role, catalyzes the conversion of 7,8-dihydroneopterin triphosphate (H2NTP) to 6-carboxy-5,6,7,8-tetrahydropterin (CPH4) and acetaldehyde. In Bacillus subtilis (strain 168), this protein is 6-carboxy-5,6,7,8-tetrahydropterin synthase (queD).